The primary structure comprises 78 residues: MKRFAVQDHELVPEHILLTPEEAQQVLMQYGVEARHLPKIHVTDPVAKEIGAKVGDIIKIKRKSPTAKESIFYRLVID.

Belongs to the archaeal Rpo5/eukaryotic RPB5 RNA polymerase subunit family. In terms of assembly, part of the RNA polymerase complex.

It localises to the cytoplasm. It catalyses the reaction RNA(n) + a ribonucleoside 5'-triphosphate = RNA(n+1) + diphosphate. In terms of biological role, DNA-dependent RNA polymerase (RNAP) catalyzes the transcription of DNA into RNA using the four ribonucleoside triphosphates as substrates. The polypeptide is DNA-directed RNA polymerase subunit Rpo5 (Methanothrix thermoacetophila (strain DSM 6194 / JCM 14653 / NBRC 101360 / PT) (Methanosaeta thermophila)).